The sequence spans 196 residues: Peroxynitrite isomerase (196 aa).

The GXWXGXG motif lies at 46 to 52; that stretch reads GVWRGRG. His186 contributes to the heme b binding site.

It belongs to the nitrobindin family. As to quaternary structure, homodimer. Heme b serves as cofactor.

The catalysed reaction is peroxynitrite = nitrate. It participates in nitrogen metabolism. Heme-binding protein able to scavenge peroxynitrite and to protect free L-tyrosine against peroxynitrite-mediated nitration, by acting as a peroxynitrite isomerase that converts peroxynitrite to nitrate. Therefore, this protein likely plays a role in peroxynitrite sensing and in the detoxification of reactive nitrogen and oxygen species (RNS and ROS, respectively). Is able to bind nitric oxide (NO) in vitro, but may act as a sensor of peroxynitrite levels in vivo. This is Peroxynitrite isomerase from Salinispora tropica (strain ATCC BAA-916 / DSM 44818 / JCM 13857 / NBRC 105044 / CNB-440).